A 124-amino-acid polypeptide reads, in one-letter code: MEQFEIIRESDADPYYFNKNLRLEECEIDGFTSIYKAPPPYSFVAGLSKNTSSNSFVIHKCLPPLQRNNTIRKRKRNPFLADRPYCINSEDMPLSDDRDMLKERHVKSRKLLLKEKGNRFYRRS.

It is found in the nucleus. Its subcellular location is the nucleolus. Has a role in meiosis. The sequence is that of Meiotically up-regulated gene 103 protein (mug103) from Schizosaccharomyces pombe (strain 972 / ATCC 24843) (Fission yeast).